The sequence spans 341 residues: Retinol dehydrogenase 10-B (341 aa).

The helical; Signal-anchor transmembrane segment at 3–23 (IVLEFFLVTFRVLWAFVLAAA) threads the bilayer. 40 to 64 (LITGAGSGLGRLFALEFARRRAQLV) contacts NADP(+). Ser-197 provides a ligand contact to substrate. Tyr-210 (proton acceptor) is an active-site residue.

It belongs to the short-chain dehydrogenases/reductases (SDR) family.

Its subcellular location is the microsome membrane. It localises to the endoplasmic reticulum membrane. It catalyses the reaction all-trans-retinol + NADP(+) = all-trans-retinal + NADPH + H(+). It participates in cofactor metabolism; retinol metabolism. Functionally, retinol dehydrogenase with a clear preference for NADP. Converts all-trans-retinol to all-trans-retinal. Has no detectable activity towards 11-cis-retinol, 9-cis-retinol and 13-cis-retinol. This chain is Retinol dehydrogenase 10-B (rdh10-b), found in Xenopus laevis (African clawed frog).